A 60-amino-acid polypeptide reads, in one-letter code: Naniproin (60 aa).

Cystine bridges form between C3–C21, C14–C38, C42–C53, and C54–C59.

This sequence belongs to the three-finger toxin family. Short-chain subfamily. Type IA cytotoxin sub-subfamily. As to quaternary structure, monomer in solution; Homodimer and oligomer in the presence of negatively charged lipids forming a pore with a size ranging between 20 and 30 angstroms. As to expression, expressed by the venom gland.

It localises to the secreted. Its subcellular location is the target cell membrane. Its function is as follows. Basic protein that binds to cell membrane and depolarizes cardiomyocytes. This cytotoxin also possesses lytic activity on many other cells, including red blood cells. Interaction with sulfatides in the cell membrane induces pore formation and cell internalization and is responsible for cytotoxicity in cardiomyocytes. It targets the mitochondrial membrane and induces mitochondrial swelling and fragmentation. Inhibits protein kinases C. It binds to the integrin alpha-V/beta-3 with a moderate affinity. This is Naniproin from Naja nigricollis (Black-necked spitting cobra).